Here is a 1522-residue protein sequence, read N- to C-terminus: Lysophospholipase NTE1 (1522 aa).

Topologically, residues 1–73 (MVDGTYVNSS…SLLVYLINGT (73 aa)) are lumenal. A helical membrane pass occupies residues 74 to 94 (VPFYLVVLGSVFTPIIVYLIL). The Cytoplasmic segment spans residues 95-1522 (RSRVLSAYSR…IHLLHRRNSI (1428 aa)). Disordered stretches follow at residues 443-468 (SVQE…TPNK), 485-523 (DLLS…ASSP), and 535-556 (SQNF…PSVV). Composition is skewed to low complexity over residues 498-511 (KTAS…PRIS) and 540-555 (PLSS…KPSV). A nucleoside 3',5'-cyclic phosphate-binding positions include 661–782 (PINV…LTKL) and 778–918 (TLTK…VAHK). Disordered stretches follow at residues 828 to 852 (QKSK…DNQP) and 1125 to 1145 (SSQN…GAPP). One can recognise a PNPLA domain in the interval 1219–1383 (LVLGGGGARG…LDNLPVLEMK (165 aa)). The short motif at 1223-1228 (GGGARG) is the GXGXXG element. Positions 1250-1254 (GTSIG) match the GXSXG motif. Ser1252 acts as the Nucleophile in catalysis. Catalysis depends on Asp1370, which acts as the Proton acceptor. Positions 1370–1372 (DGG) match the DGA/G motif.

The protein belongs to the NTE family.

The protein resides in the endoplasmic reticulum membrane. It carries out the reaction a 1-acyl-sn-glycero-3-phosphocholine + H2O = sn-glycerol 3-phosphocholine + a fatty acid + H(+). Inhibited by organophosphorus esters. Intracellular phospholipase B that catalyzes the double deacylation of phosphatidylcholine (PC) to glycerophosphocholine (GroPCho). Plays an important role in membrane lipid homeostasis. Responsible for the rapid PC turnover in response to inositol, elevated temperatures, or when choline is present in the growth medium. This chain is Lysophospholipase NTE1 (NTE1), found in Eremothecium gossypii (strain ATCC 10895 / CBS 109.51 / FGSC 9923 / NRRL Y-1056) (Yeast).